Reading from the N-terminus, the 290-residue chain is Beta-lactamase OXY-2 (290 aa).

An N-terminal signal peptide occupies residues Met-1–Ala-27. Ser-72 serves as the catalytic Acyl-ester intermediate. Lys-236–Gly-238 contacts substrate.

Belongs to the class-A beta-lactamase family.

It catalyses the reaction a beta-lactam + H2O = a substituted beta-amino acid. Functionally, hydrolyzes broad-spectrum beta-lactam antibiotics. Active against all third-generation cephalosporins but ceftazidime. In Klebsiella oxytoca, this protein is Beta-lactamase OXY-2 (bla).